A 2569-amino-acid polypeptide reads, in one-letter code: Highly reducing polyketide synthase pks5 (2569 aa).

Residues 1-25 (MVVKFANGVRNRGNGDEGQRGTQRP) are disordered. The Ketosynthase family 3 (KS3) domain occupies 27 to 452 (STPIAIVGMS…GTNVHVIMEA (426 aa)). Residues cysteine 200, histidine 335, and histidine 375 each act as for beta-ketoacyl synthase activity in the active site. Positions 572–892 (IFNGQGAQWY…PYLSCLRRNI (321 aa)) are malonyl-CoA:ACP transacylase (MAT) domain. Residues 960-1097 (HELLGSSVPG…GYVSAEDSSK (138 aa)) form an N-terminal hotdog fold region. Residues 960 to 1268 (HELLGSSVPG…LRLQKIQAED (309 aa)) are dehydratase (DH) domain. Positions 960–1270 (HELLGSSVPG…LQKIQAEDDN (311 aa)) constitute a PKS/mFAS DH domain. Histidine 992 serves as the catalytic Proton acceptor; for dehydratase activity. Residues 1117-1270 (RVRHVRPDAM…LQKIQAEDDN (154 aa)) form a C-terminal hotdog fold region. The Proton donor; for dehydratase activity role is filled by aspartate 1179. A methyltransferase (CMet) domain region spans residues 1457-1567 (LEVGAGTGGA…RKLLKPKGKL (111 aa)). Residues 1855–2170 (DLLNKIEFLE…SGTHMGKIVL (316 aa)) are enoyl reductase (ER) domain. The tract at residues 2195–2371 (THLIVGGLRG…AISINLGPVD (177 aa)) is ketoreductase (KR) domain. Residues 2485–2562 (AARKLVSELI…DFAALVASRS (78 aa)) enclose the Carrier domain. An O-(pantetheine 4'-phosphoryl)serine modification is found at serine 2522.

Highly reducing polyketide synthase; part of the gene cluster that mediates the biosynthesis of abscisic acid (ABA), a phytohormone that acts antagonistically toward salicylic acid (SA), jasmonic acid (JA) and ethylene (ETH) signaling, to impede plant defense responses. The first step of the pathway catalyzes the reaction from farnesyl diphosphate to alpha-ionylideneethane performed by the alpha-ionylideneethane synthase abl3 via a three-step reaction mechanism involving 2 neutral intermediates, beta-farnesene and allofarnesene. The cytochrome P450 monooxygenase abl1 might then be involved in the conversion of alpha-ionylideneethane to alpha-ionylideneacetic acid. Alpha-ionylideneacetic acid is further converted to abscisic acid in 2 steps involving the cytochrome P450 monooxygenase abl2 and the short-chain dehydrogenase/reductase abl4, via the intermediates 1'-deoxy-ABA or 1',4'-trans-diol-ABA, depending on the order of action of these 2 enzymes. Abl2 is responsible for the hydroxylation of carbon atom C-1' and abl4 might be involved in the oxidation of the C-4' carbon atom. Pks5 is clearly not involved in the production of ABA. Nonetheless, the possibility cannot be excluded that pks5 may modify ABA into another compound. It also cannot be excluded the possibility that pks5 also has a function completely independent of ABA synthesis. Pks5 is not required for pathogenicity on B.napus cotyledon. In Leptosphaeria maculans (strain JN3 / isolate v23.1.3 / race Av1-4-5-6-7-8) (Blackleg fungus), this protein is Highly reducing polyketide synthase pks5.